We begin with the raw amino-acid sequence, 311 residues long: Urease accessory protein UreD (311 aa).

It belongs to the UreD family. UreD, UreF and UreG form a complex that acts as a GTP-hydrolysis-dependent molecular chaperone, activating the urease apoprotein by helping to assemble the nickel containing metallocenter of UreC. The UreE protein probably delivers the nickel.

It is found in the cytoplasm. In terms of biological role, required for maturation of urease via the functional incorporation of the urease nickel metallocenter. In Synechococcus sp. (strain CC9605), this protein is Urease accessory protein UreD.